The sequence spans 67 residues: Putative cytosolic sulfotransferase 2 (67 aa).

31–33 serves as a coordination point for 3'-phosphoadenylyl sulfate; sequence RDG.

The protein belongs to the sulfotransferase 1 family.

The protein resides in the cytoplasm. Functionally, sulfotransferase that utilizes 3'-phospho-5'-adenylyl sulfate (PAPS) as sulfonate donor. In Arabidopsis thaliana (Mouse-ear cress), this protein is Putative cytosolic sulfotransferase 2 (SOT2).